The following is a 336-amino-acid chain: Nuclear egress protein 2 (336 aa).

Topologically, residues 1–315 are perinuclear space; it reads MASPEERLLD…AWRYSWRATP (315 aa). 2 disordered regions span residues 193-221 and 277-297; these read RSGQ…GCLG and RTRE…VPPE. A compositionally biased stretch (basic residues) spans 277-288; the sequence is RTRETRRMRGSH. Residues 316–333 traverse the membrane as a helical segment; that stretch reads YLARVLAVTAVALLLMFL. At 334-336 the chain is on the nuclear side; it reads RWT.

This sequence belongs to the herpesviridae NEC2 protein family. In terms of assembly, forms a heterodimeric viral nuclear egress complex (NEC) with NEC1. Interacts with host IKBKE; this interaction inhibits host IKBKE kinase activity and IRF3 nuclear translocation. Post-translationally, phosphorylated.

It is found in the host nucleus inner membrane. It localises to the host cytoplasm. Its subcellular location is the host perinuclear region. Its function is as follows. Plays an essential role in virion nuclear egress, the first step of virion release from infected cell. Within the host nucleus, NEC1 interacts with the newly formed capsid through the vertexes and directs it to the inner nuclear membrane by associating with NEC2. Induces the budding of the capsid at the inner nuclear membrane as well as its envelopment into the perinuclear space. There, the NEC1/NEC2 complex promotes the fusion of the enveloped capsid with the outer nuclear membrane and the subsequent release of the viral capsid into the cytoplasm where it will reach the secondary budding sites in the host Golgi or trans-Golgi network. Inhibits host IKBKE and IRF3, thereby impairing type I IFN signaling. The polypeptide is Nuclear egress protein 2 (Homo sapiens (Human)).